Reading from the N-terminus, the 439-residue chain is MADPDVLTEVPAALKRLAKYVIRGFYGIEHALALDILIRNPCVKEEDMLELLKFDRKQLRSVLNNLKGDKFIKCRMRVETAADGKTTRHNYYFINYRTLVNVVKYKLDHMRRRIETDERDSTNRASFKCPVCSSTFTDLEANQLFDPMTGTFRCTFCHTEVEEDESAMPKKDARTLLARFNEQIEPIYALLRETEDVNLAYEILEPEPTEIPALKQSKDHAATTAGAASLAGGHHREAWATKGPSYEDLYTQNVVINMDDHEDLHRASLEGKSAKERPIWLRESTVQGAYSSEDMKEGGIDMDAFQEHEEGRAGPDDNEEVMRALLIHEKKTSSAMAGSVGAAAPVTTANGSDSESETSESDDDSPPRPAAVAVHKREEDEEEDDEFEEVADDPIVMVAGRPFSYSEVSQRPELVAQMTPEEKEAYIAMGQRMFEDLFE.

Ala2 carries the post-translational modification N-acetylalanine. In terms of domain architecture, HTH TFE/IIEalpha-type spans Leu14–Lys104. Residue Lys67 is modified to N6-acetyllysine. Zn(2+) is bound by residues Cys129, Cys132, Cys154, and Cys157. The segment at Cys129–Cys157 adopts a C4-type zinc-finger fold. Position 268 is a phosphoserine (Ser268). The span at Ser333–Ala344 shows a compositional bias: low complexity. The tract at residues Ser333–Asp392 is disordered. 2 stretches are compositionally biased toward acidic residues: residues Ser354–Asp364 and Glu379–Asp392.

The protein belongs to the TFIIE alpha subunit family. As to quaternary structure, tetramer of two alpha and two beta chains. Interacts with TAF6/TAFII80. Interacts with ATF7IP. Interacts with SND1. Part of TBP-based Pol II pre-initiation complex (PIC), in which Pol II core assembles with general transcription factors and other specific initiation factors including GTF2E1, GTF2E2, GTF2F1, GTF2F2, TCEA1, ERCC2, ERCC3, GTF2H2, GTF2H3, GTF2H4, GTF2H5, GTF2A1, GTF2A2, GTF2B and TBP; this large multi-subunit PIC complex mediates DNA unwinding and targets Pol II core to the transcription start site where the first phosphodiester bond forms.

The protein resides in the nucleus. Recruits TFIIH to the initiation complex and stimulates the RNA polymerase II C-terminal domain kinase and DNA-dependent ATPase activities of TFIIH. Both TFIIH and TFIIE are required for promoter clearance by RNA polymerase. The polypeptide is General transcription factor IIE subunit 1 (GTF2E1) (Pongo abelii (Sumatran orangutan)).